Reading from the N-terminus, the 62-residue chain is Andropin (62 aa).

An N-terminal signal peptide occupies residues 1–22 (MKYFSVLVVLTLILAIVDQSDA).

This sequence belongs to the andropin family. As to expression, ejaculatory duct of adult males.

Its subcellular location is the secreted. Male-specific peptide with moderate activity against Gram-positive bacteria. In Drosophila teissieri (Fruit fly), this protein is Andropin (Anp).